A 112-amino-acid polypeptide reads, in one-letter code: Na(+)/H(+) antiporter subunit C (112 aa).

3 helical membrane passes run 4–21, 28–50, and 70–92; these read LMSI…YLIL, VVVG…AGLQ, and QALI…VLAY.

This sequence belongs to the CPA3 antiporters (TC 2.A.63) subunit C family. Forms a heterooligomeric complex that consists of seven subunits: MrpA, MrpB, MrpC, MrpD, MrpE, MrpF and MrpG.

It localises to the cell membrane. Mnh complex is a Na(+)Li(+)/H(+) antiporter involved in Na(+) and/or Li(+) excretion and Na(+) resistance. Na(+)/H(+) antiport consumes a transmembrane electrical potential, and is thus inferred to be electrogenic. Does not transport K(+), Ca(2+) or Mg(2+). The protein is Na(+)/H(+) antiporter subunit C (mrpC) of Alkalihalophilus pseudofirmus (strain ATCC BAA-2126 / JCM 17055 / OF4) (Bacillus pseudofirmus).